A 312-amino-acid polypeptide reads, in one-letter code: Beta-ketoacyl-[acyl-carrier-protein] synthase III (312 aa).

Residues Cys112 and His237 contribute to the active site. Residues 238–242 (QANIR) form an ACP-binding region. Asn267 is a catalytic residue.

Belongs to the thiolase-like superfamily. FabH family. In terms of assembly, homodimer.

The protein localises to the cytoplasm. It catalyses the reaction malonyl-[ACP] + acetyl-CoA + H(+) = 3-oxobutanoyl-[ACP] + CO2 + CoA. It participates in lipid metabolism; fatty acid biosynthesis. In terms of biological role, catalyzes the condensation reaction of fatty acid synthesis by the addition to an acyl acceptor of two carbons from malonyl-ACP. Catalyzes the first condensation reaction which initiates fatty acid synthesis and may therefore play a role in governing the total rate of fatty acid production. Possesses both acetoacetyl-ACP synthase and acetyl transacylase activities. Its substrate specificity determines the biosynthesis of branched-chain and/or straight-chain of fatty acids. This chain is Beta-ketoacyl-[acyl-carrier-protein] synthase III, found in Bacillus pumilus (strain SAFR-032).